The sequence spans 87 residues: Conotoxin QcMNCL-XIII0.1 (87 aa).

A signal peptide spans 1–18 (MNCLQLLLVLLLISTIAA). Positions 19-34 (LHGDGRVPQRRGRNIR) are excised as a propeptide.

In terms of processing, contains 4 disulfide bonds. Expressed by the venom duct.

It is found in the secreted. May interact and inhibit Cav3.1/CACNA1G calcium channels. In a ex vivo model, shows ability to block nerve signal transduction. The chain is Conotoxin QcMNCL-XIII0.1 from Conus quercinus (Oak cone).